Reading from the N-terminus, the 138-residue chain is Basic phospholipase A2 homolog promutoxin (138 aa).

The N-terminal stretch at 1-16 (MRTLWIMAVLLLGVEG) is a signal peptide. 7 disulfide bridges follow: Cys-42–Cys-132, Cys-44–Cys-60, Cys-59–Cys-112, Cys-65–Cys-138, Cys-66–Cys-105, Cys-73–Cys-98, and Cys-91–Cys-103. Residues 122 to 133 (KKHRVTMKFLCK) form an important for membrane-damaging activities in eukaryotes and bacteria; heparin-binding region.

It belongs to the phospholipase A2 family. Group II subfamily. R49 sub-subfamily. In terms of assembly, homodimer; non-covalently linked. In terms of tissue distribution, expressed by the venom gland.

The protein localises to the secreted. In terms of biological role, snake venom phospholipase A2 homolog that lacks enzymatic activity. Exhibits potent myotoxicity causing myonecrosis and edema in the gastrocnemius muscle of mice. Is also able to stimulate the release of IL12 (IL12A-IL12B), TNF-alpha (TNF), IL6 and IL1-beta (IL1B) from human monocytes, and induce IL2, TNFalpha and IL6 release from T-cells. A model of myotoxic mechanism has been proposed: an apo Lys49-PLA2 is activated by the entrance of a hydrophobic molecule (e.g. fatty acid) at the hydrophobic channel of the protein leading to a reorientation of a monomer. This reorientation causes a transition between 'inactive' to 'active' states, causing alignment of C-terminal and membrane-docking sites (MDoS) side-by-side and putting the membrane-disruption sites (MDiS) in the same plane, exposed to solvent and in a symmetric position for both monomers. The MDoS region stabilizes the toxin on membrane by the interaction of charged residues with phospholipid head groups. Subsequently, the MDiS region destabilizes the membrane with penetration of hydrophobic residues. This insertion causes a disorganization of the membrane, allowing an uncontrolled influx of ions (i.e. calcium and sodium), and eventually triggering irreversible intracellular alterations and cell death. The sequence is that of Basic phospholipase A2 homolog promutoxin from Protobothrops mucrosquamatus (Taiwan habu).